A 543-amino-acid polypeptide reads, in one-letter code: 2,3-bisphosphoglycerate-independent phosphoglycerate mutase (543 aa).

Residues aspartate 20 and serine 73 each contribute to the Mn(2+) site. The active-site Phosphoserine intermediate is serine 73. Substrate contacts are provided by residues histidine 134, arginine 166–aspartate 167, arginine 198, arginine 204, arginine 278–arginine 281, and lysine 360. Residues aspartate 428, histidine 432, aspartate 469, histidine 470, and histidine 488 each coordinate Mn(2+).

The protein belongs to the BPG-independent phosphoglycerate mutase family. As to quaternary structure, monomer. It depends on Mn(2+) as a cofactor.

The enzyme catalyses (2R)-2-phosphoglycerate = (2R)-3-phosphoglycerate. It participates in carbohydrate degradation; glycolysis; pyruvate from D-glyceraldehyde 3-phosphate: step 3/5. Its function is as follows. Catalyzes the interconversion of 2-phosphoglycerate and 3-phosphoglycerate. This Rhodopirellula baltica (strain DSM 10527 / NCIMB 13988 / SH1) protein is 2,3-bisphosphoglycerate-independent phosphoglycerate mutase.